The sequence spans 306 residues: D-alanine--D-alanine ligase B (306 aa).

An ATP-grasp domain is found at 101-303; the sequence is KLLWQGAGLP…FSQLVVRILE (203 aa). Position 134-189 (134-189) interacts with ATP; it reads ISALGLPLIVKPSREGSSVGMTKVVEENALQGALSLAFQHDDEILIEKWLCGPEFT. Asp-257, Glu-270, and Asn-272 together coordinate Mg(2+).

Belongs to the D-alanine--D-alanine ligase family. In terms of assembly, monomer. The cofactor is Mg(2+). Requires Mn(2+) as cofactor.

It localises to the cytoplasm. It catalyses the reaction 2 D-alanine + ATP = D-alanyl-D-alanine + ADP + phosphate + H(+). It functions in the pathway cell wall biogenesis; peptidoglycan biosynthesis. In terms of biological role, cell wall formation. The sequence is that of D-alanine--D-alanine ligase B (ddlB) from Salmonella typhimurium (strain LT2 / SGSC1412 / ATCC 700720).